An 823-amino-acid chain; its full sequence is Leucine--tRNA ligase (823 aa).

Residues 42 to 52 (PYPSGTLHMGH) carry the 'HIGH' region motif. The 'KMSKS' region motif lies at 575-579 (KMSKS). An ATP-binding site is contributed by Lys578.

The protein belongs to the class-I aminoacyl-tRNA synthetase family.

Its subcellular location is the cytoplasm. The catalysed reaction is tRNA(Leu) + L-leucine + ATP = L-leucyl-tRNA(Leu) + AMP + diphosphate. This chain is Leucine--tRNA ligase, found in Legionella pneumophila (strain Corby).